Reading from the N-terminus, the 525-residue chain is GMP synthase [glutamine-hydrolyzing] (525 aa).

Positions 9 to 207 (RILILDFGSQ…VRDICQCEAL (199 aa)) constitute a Glutamine amidotransferase type-1 domain. The active-site Nucleophile is the Cys86. Residues His181 and Glu183 contribute to the active site. Positions 208-400 (WTPAKIIDDA…LGLPYDMLYR (193 aa)) constitute a GMPS ATP-PPase domain. Position 235–241 (235–241 (SGGVDSS)) interacts with ATP.

As to quaternary structure, homodimer.

The enzyme catalyses XMP + L-glutamine + ATP + H2O = GMP + L-glutamate + AMP + diphosphate + 2 H(+). The protein operates within purine metabolism; GMP biosynthesis; GMP from XMP (L-Gln route): step 1/1. Its function is as follows. Catalyzes the synthesis of GMP from XMP. The sequence is that of GMP synthase [glutamine-hydrolyzing] from Shigella dysenteriae serotype 1 (strain Sd197).